We begin with the raw amino-acid sequence, 542 residues long: CTP synthase (542 aa).

Positions 1-265 are amidoligase domain; that stretch reads MTRYIFVTGG…DDFVVERFGL (265 aa). Ser13 lines the CTP pocket. Ser13 is a binding site for UTP. ATP contacts are provided by residues 14-19 and Asp71; that span reads SLGKGI. Mg(2+) contacts are provided by Asp71 and Glu139. Residues 146 to 148, 186 to 191, and Lys222 contribute to the CTP site; these read DIE and KTKPTQ. Residues 186-191 and Lys222 each bind UTP; that span reads KTKPTQ. A Glutamine amidotransferase type-1 domain is found at 290–541; sequence TIAMVGKYME…VKAALAQKNK (252 aa). Gly351 is an L-glutamine binding site. Residue Cys378 is the Nucleophile; for glutamine hydrolysis of the active site. L-glutamine is bound by residues 379–382, Glu402, and Arg469; that span reads LGMQ. Catalysis depends on residues His514 and Glu516.

It belongs to the CTP synthase family. Homotetramer.

The enzyme catalyses UTP + L-glutamine + ATP + H2O = CTP + L-glutamate + ADP + phosphate + 2 H(+). It carries out the reaction L-glutamine + H2O = L-glutamate + NH4(+). It catalyses the reaction UTP + NH4(+) + ATP = CTP + ADP + phosphate + 2 H(+). It functions in the pathway pyrimidine metabolism; CTP biosynthesis via de novo pathway; CTP from UDP: step 2/2. Allosterically activated by GTP, when glutamine is the substrate; GTP has no effect on the reaction when ammonia is the substrate. The allosteric effector GTP functions by stabilizing the protein conformation that binds the tetrahedral intermediate(s) formed during glutamine hydrolysis. Inhibited by the product CTP, via allosteric rather than competitive inhibition. Catalyzes the ATP-dependent amination of UTP to CTP with either L-glutamine or ammonia as the source of nitrogen. Regulates intracellular CTP levels through interactions with the four ribonucleotide triphosphates. In Pseudomonas putida (strain W619), this protein is CTP synthase.